Here is a 590-residue protein sequence, read N- to C-terminus: MHRYRTHTCGALTEAQVGDTVRVSGWCHRIRDHGGVLFVDLRDHYGLTQVVFDPDSAAFAAAEKVRAEWVIRVDGRVRLRPEGTENSELATGKVEIYATDLEVLGPAAELPLPVFGDQDYPEDIRLRYRFLDLRRERIHGNIMKRGQIIDSLRQRMKGQGFFEFQTPILTASSPEGARDFLVPSRIHPGKFYALPQAPQQYKQLIMMSGFDRYFQIAPCFRDEDPRADRLPGEFYQLDLEMSFVTQDDVFAAVEPVIRGVFEEFGGGKPVTQNWPRIPYAEALRKYGSDKPDLRNPLVMQNVSEHFRGSNFKVFARLLEDPKNEVWAIPGPTGGSRAFCDRMNSWAQGEGQPGLGYIMWREGGEGAGPLANNIGPERTAAIREQLGLKDGDAAFFVAGNPEKFYKFAGLARTKVGEELKLIDTERFELAWIVDFPFYEWSDEEKKIDFSHNPFSMPQGGLEALNGQDPLTIKAFQYDIACNGYEIASGGIRNHRPEAMVKAFELAGYDEATVIERFGGMYRAFQYGAPPHGGMAAGIDRIVMLLCGVSNLREISLFPMNQQALDLLMGAPNEATPKQMKELHIRPALPAK.

Glu-175 is a binding site for L-aspartate. Positions 199–202 (QQYK) are aspartate. Arg-221 and His-450 together coordinate L-aspartate. 221–223 (RDE) provides a ligand contact to ATP. Residue Glu-484 coordinates ATP. Arg-491 serves as a coordination point for L-aspartate. ATP is bound at residue 536–539 (GIDR).

It belongs to the class-II aminoacyl-tRNA synthetase family. Type 1 subfamily. Homodimer.

It localises to the cytoplasm. It catalyses the reaction tRNA(Asx) + L-aspartate + ATP = L-aspartyl-tRNA(Asx) + AMP + diphosphate. Functionally, aspartyl-tRNA synthetase with relaxed tRNA specificity since it is able to aspartylate not only its cognate tRNA(Asp) but also tRNA(Asn). Reaction proceeds in two steps: L-aspartate is first activated by ATP to form Asp-AMP and then transferred to the acceptor end of tRNA(Asp/Asn). This Azorhizobium caulinodans (strain ATCC 43989 / DSM 5975 / JCM 20966 / LMG 6465 / NBRC 14845 / NCIMB 13405 / ORS 571) protein is Aspartate--tRNA(Asp/Asn) ligase.